Here is a 158-residue protein sequence, read N- to C-terminus: Cyclic pyranopterin monophosphate synthase (158 aa).

Substrate is bound by residues 75–77 (LCH) and 113–114 (ME). The active site involves Asp128.

It belongs to the MoaC family. Homohexamer; trimer of dimers.

The enzyme catalyses (8S)-3',8-cyclo-7,8-dihydroguanosine 5'-triphosphate = cyclic pyranopterin phosphate + diphosphate. Its pathway is cofactor biosynthesis; molybdopterin biosynthesis. In terms of biological role, catalyzes the conversion of (8S)-3',8-cyclo-7,8-dihydroguanosine 5'-triphosphate to cyclic pyranopterin monophosphate (cPMP). This Actinobacillus succinogenes (strain ATCC 55618 / DSM 22257 / CCUG 43843 / 130Z) protein is Cyclic pyranopterin monophosphate synthase.